A 303-amino-acid chain; its full sequence is Oxygen-dependent coproporphyrinogen-III oxidase (303 aa).

Residue serine 93 participates in substrate binding. The a divalent metal cation site is built by histidine 97 and histidine 107. Histidine 107 (proton donor) is an active-site residue. 109–111 (NIR) provides a ligand contact to substrate. 2 residues coordinate a divalent metal cation: histidine 146 and histidine 176. Residues 241 to 276 (YVEFNLLLDRGTLFGIQSNGRIESILSSMPPLVKWE) form an important for dimerization region.

It belongs to the aerobic coproporphyrinogen-III oxidase family. As to quaternary structure, homodimer. Requires a divalent metal cation as cofactor.

Its subcellular location is the cytoplasm. It catalyses the reaction coproporphyrinogen III + O2 + 2 H(+) = protoporphyrinogen IX + 2 CO2 + 2 H2O. It participates in porphyrin-containing compound metabolism; protoporphyrin-IX biosynthesis; protoporphyrinogen-IX from coproporphyrinogen-III (O2 route): step 1/1. Involved in the heme biosynthesis. Catalyzes the aerobic oxidative decarboxylation of propionate groups of rings A and B of coproporphyrinogen-III to yield the vinyl groups in protoporphyrinogen-IX. The chain is Oxygen-dependent coproporphyrinogen-III oxidase from Wigglesworthia glossinidia brevipalpis.